A 458-amino-acid polypeptide reads, in one-letter code: Argininosuccinate lyase (458 aa).

It belongs to the lyase 1 family. Argininosuccinate lyase subfamily.

It localises to the cytoplasm. It catalyses the reaction 2-(N(omega)-L-arginino)succinate = fumarate + L-arginine. It participates in amino-acid biosynthesis; L-arginine biosynthesis; L-arginine from L-ornithine and carbamoyl phosphate: step 3/3. The sequence is that of Argininosuccinate lyase from Hydrogenobaculum sp. (strain Y04AAS1).